The following is a 518-amino-acid chain: Glutamate--cysteine ligase (518 aa).

It belongs to the glutamate--cysteine ligase type 1 family. Type 1 subfamily.

It carries out the reaction L-cysteine + L-glutamate + ATP = gamma-L-glutamyl-L-cysteine + ADP + phosphate + H(+). It participates in sulfur metabolism; glutathione biosynthesis; glutathione from L-cysteine and L-glutamate: step 1/2. The sequence is that of Glutamate--cysteine ligase from Citrobacter koseri (strain ATCC BAA-895 / CDC 4225-83 / SGSC4696).